The primary structure comprises 128 residues: Peptidyl-prolyl cis-trans isomerase NIMA-interacting 4 (128 aa).

Residues 1-34 (MPPKGKGGKGAKGAAASGSGDSDKKEKAQKGGTA) are disordered. Residues 32 to 126 (GTAVKVRHIL…FGYHIIMVEG (95 aa)) enclose the PpiC domain.

It belongs to the PpiC/parvulin rotamase family. PIN4 subfamily.

It localises to the nucleus. It is found in the nucleolus. Its subcellular location is the cytoplasm. The protein resides in the cytoskeleton. The protein localises to the spindle. The catalysed reaction is [protein]-peptidylproline (omega=180) = [protein]-peptidylproline (omega=0). In terms of biological role, may be involved as a ribosomal RNA processing factor in ribosome biogenesis. Binds to DNA. This chain is Peptidyl-prolyl cis-trans isomerase NIMA-interacting 4 (pin4), found in Danio rerio (Zebrafish).